A 289-amino-acid chain; its full sequence is Digeranylgeranylglyceryl phosphate synthase (289 aa).

The next 8 membrane-spanning stretches (helical) occupy residues 18–38 (LMAG…LISG), 47–67 (AFPF…SGAG), 99–119 (FYFS…INSI), 120–140 (CGSI…TLKG), 163–183 (IFGF…ALAI), 218–238 (LAVL…FMSV), 243–263 (YIYL…QLLV), and 269–289 (KSSK…IAGV).

It belongs to the UbiA prenyltransferase family. DGGGP synthase subfamily. The cofactor is Mg(2+).

It localises to the cell membrane. The enzyme catalyses sn-3-O-(geranylgeranyl)glycerol 1-phosphate + (2E,6E,10E)-geranylgeranyl diphosphate = 2,3-bis-O-(geranylgeranyl)-sn-glycerol 1-phosphate + diphosphate. It participates in membrane lipid metabolism; glycerophospholipid metabolism. Prenyltransferase that catalyzes the transfer of the geranylgeranyl moiety of geranylgeranyl diphosphate (GGPP) to the C2 hydroxyl of (S)-3-O-geranylgeranylglyceryl phosphate (GGGP). This reaction is the second ether-bond-formation step in the biosynthesis of archaeal membrane lipids. The chain is Digeranylgeranylglyceryl phosphate synthase from Methanosarcina mazei (strain ATCC BAA-159 / DSM 3647 / Goe1 / Go1 / JCM 11833 / OCM 88) (Methanosarcina frisia).